A 353-amino-acid chain; its full sequence is Chorismate synthase (353 aa).

The NADP(+) site is built by Arg-48 and Arg-54. FMN contacts are provided by residues 125–127 (RSS), 238–239 (NA), Gly-278, 293–297 (KPTSS), and Arg-319.

The protein belongs to the chorismate synthase family. As to quaternary structure, homotetramer. The cofactor is FMNH2.

It carries out the reaction 5-O-(1-carboxyvinyl)-3-phosphoshikimate = chorismate + phosphate. Its pathway is metabolic intermediate biosynthesis; chorismate biosynthesis; chorismate from D-erythrose 4-phosphate and phosphoenolpyruvate: step 7/7. Its function is as follows. Catalyzes the anti-1,4-elimination of the C-3 phosphate and the C-6 proR hydrogen from 5-enolpyruvylshikimate-3-phosphate (EPSP) to yield chorismate, which is the branch point compound that serves as the starting substrate for the three terminal pathways of aromatic amino acid biosynthesis. This reaction introduces a second double bond into the aromatic ring system. The protein is Chorismate synthase of Bordetella bronchiseptica (strain ATCC BAA-588 / NCTC 13252 / RB50) (Alcaligenes bronchisepticus).